The following is a 410-amino-acid chain: Peptidase T (410 aa).

His79 provides a ligand contact to Zn(2+). Asp81 is a catalytic residue. Asp142 is a Zn(2+) binding site. Glu176 serves as the catalytic Proton acceptor. Residues Glu177, Asp199, and His381 each coordinate Zn(2+).

This sequence belongs to the peptidase M20B family. Zn(2+) is required as a cofactor.

Its subcellular location is the cytoplasm. It carries out the reaction Release of the N-terminal residue from a tripeptide.. Cleaves the N-terminal amino acid of tripeptides. This Brevibacillus brevis (strain 47 / JCM 6285 / NBRC 100599) protein is Peptidase T.